Consider the following 771-residue polypeptide: Post-GPI attachment to proteins factor 6 (771 aa).

The signal sequence occupies residues Met1–Ala34. Topologically, residues Gly35–Arg545 are extracellular. Asn144 carries N-linked (GlcNAc...) asparagine glycosylation. Residues Phe322–Arg343 form a disordered region. The span at Asp334–Arg343 shows a compositional bias: basic and acidic residues. Residues Asn407 and Asn431 are each glycosylated (N-linked (GlcNAc...) asparagine). The EGF-like domain maps to Pro497 to Thr533. Disulfide bonds link Cys498–Cys508, Cys502–Cys521, and Cys523–Cys532. The helical transmembrane segment at Ala546–Val566 threads the bilayer. The Cytoplasmic portion of the chain corresponds to Arg567 to Arg568. Residues Phe569–Ala589 traverse the membrane as a helical segment. Over Cys590–Thr605 the chain is Extracellular. The helical transmembrane segment at Leu606–Ala626 threads the bilayer. The Cytoplasmic portion of the chain corresponds to Arg627 to Lys629. Residues Thr630–Leu650 form a helical membrane-spanning segment. The Extracellular segment spans residues Asp651–Arg653. A helical transmembrane segment spans residues Gly654–Ala674. Topologically, residues Tyr675–Arg690 are cytoplasmic. The helical transmembrane segment at Trp691–Ser711 threads the bilayer. Over Met712–Asn717 the chain is Extracellular. Residues Tyr718 to Pro738 traverse the membrane as a helical segment. The Cytoplasmic segment spans residues Pro739–Thr771.

This sequence belongs to the TMEM8 family. Post-translationally, glycosylated. As to expression, expressed in pancreas, placenta, spleen, liver, kidney, bone marrow, peripheral blood leukocytes and tonsil.

The protein resides in the cell membrane. Its subcellular location is the lysosome membrane. It carries out the reaction a 1,2-diacyl-sn-glycero-3-phosphocholine + H2O = a 1-acyl-sn-glycero-3-phosphocholine + a fatty acid + H(+). Its function is as follows. Involved in the lipid remodeling steps of GPI-anchor maturation. Lipid remodeling steps consist in the generation of 2 saturated fatty chains at the sn-2 position of GPI-anchor proteins (GPI-AP). Has phospholipase A2 activity that removes an acyl-chain at the sn-2 position of GPI-anchors during the remodeling of GPI. Required for the shedding of the GPI-AP CRIPTO, but not CFC1, at the cell surface. Shedding of CRIPTO modulates Nodal signaling by allowing soluble CRIPTO to act as a Nodal coreceptor on other cells. Also indirectly involved in the translocation of RAC1 from the cytosol to the plasma membrane by maintaining the steady state amount of CAV1-enriched plasma membrane subdomains, stabilizing RAC1 at the plasma membrane. In contrast to myomaker (TMEM8C), has no fusogenic activity. This chain is Post-GPI attachment to proteins factor 6, found in Homo sapiens (Human).